The primary structure comprises 376 residues: NIF3-like protein 1 (376 aa).

Residue lysine 108 is modified to N6-acetyllysine. Residues 243–376 are mediates interaction with COPS2; it reads LLLHTGMGRL…ETDRDPLRVV (134 aa). Residue threonine 254 is modified to Phosphothreonine. At serine 258 the chain carries Phosphoserine.

The protein belongs to the GTP cyclohydrolase I type 2/NIF3 family. As to quaternary structure, homodimer. Interacts with COPS2. Interacts with THOC7.

The protein localises to the cytoplasm. It is found in the nucleus. May function as a transcriptional corepressor through its interaction with COPS2, negatively regulating the expression of genes involved in neuronal differentiation. This is NIF3-like protein 1 from Rattus norvegicus (Rat).